A 512-amino-acid chain; its full sequence is ATP synthase subunit alpha (512 aa).

169-176 (GDRQTGKT) contacts ATP.

Belongs to the ATPase alpha/beta chains family. In terms of assembly, F-type ATPases have 2 components, CF(1) - the catalytic core - and CF(0) - the membrane proton channel. CF(1) has five subunits: alpha(3), beta(3), gamma(1), delta(1), epsilon(1). CF(0) has three main subunits: a(1), b(2) and c(9-12). The alpha and beta chains form an alternating ring which encloses part of the gamma chain. CF(1) is attached to CF(0) by a central stalk formed by the gamma and epsilon chains, while a peripheral stalk is formed by the delta and b chains.

The protein resides in the cell membrane. The catalysed reaction is ATP + H2O + 4 H(+)(in) = ADP + phosphate + 5 H(+)(out). Functionally, produces ATP from ADP in the presence of a proton gradient across the membrane. The alpha chain is a regulatory subunit. This chain is ATP synthase subunit alpha, found in Buchnera aphidicola subsp. Acyrthosiphon pisum (strain Tuc7).